The primary structure comprises 255 residues: Spectinomycin 9-adenylyltransferase (255 aa).

It carries out the reaction spectinomycin + ATP = 9-O-adenylylspectinomycin + diphosphate. In terms of biological role, mediates bacterial resistance to the antibiotic spectinomycin but not streptomycin. This Enterococcus faecalis (Streptococcus faecalis) protein is Spectinomycin 9-adenylyltransferase.